The sequence spans 136 residues: ATP synthase epsilon chain (136 aa).

Belongs to the ATPase epsilon chain family. F-type ATPases have 2 components, CF(1) - the catalytic core - and CF(0) - the membrane proton channel. CF(1) has five subunits: alpha(3), beta(3), gamma(1), delta(1), epsilon(1). CF(0) has three main subunits: a, b and c.

It is found in the cell inner membrane. Functionally, produces ATP from ADP in the presence of a proton gradient across the membrane. The chain is ATP synthase epsilon chain from Agrobacterium fabrum (strain C58 / ATCC 33970) (Agrobacterium tumefaciens (strain C58)).